Reading from the N-terminus, the 413-residue chain is Putative competence-damage inducible protein (413 aa).

This sequence belongs to the CinA family.

The chain is Putative competence-damage inducible protein from Thermoanaerobacter sp. (strain X514).